A 361-amino-acid polypeptide reads, in one-letter code: Peptidyl-prolyl cis-trans isomerase CYP40 (361 aa).

Positions 7–172 (FMDISIGGEL…QDVVIHDCGE (166 aa)) constitute a PPIase cyclophilin-type domain. TPR repeat units follow at residues 212–245 (VDFV…LDIC) and 298–331 (VKAL…EPND).

It belongs to the cyclophilin-type PPIase family. In terms of tissue distribution, expressed at low levels in seedlings, roots, shoots, leaves, stems, inflorescences, flowers and siliques, with highest levels dividing tissues.

It localises to the cytoplasm. The catalysed reaction is [protein]-peptidylproline (omega=180) = [protein]-peptidylproline (omega=0). With respect to regulation, binds cyclosporin A (CsA). CsA mediates some of its effects via an inhibitory action on PPIase. In terms of biological role, PPIases accelerate the folding of proteins. It catalyzes the cis-trans isomerization of proline imidic peptide bonds in oligopeptides. Involved in promoting the expression of the juvenile phase of vegetative development, and, to a lower extent, in regulating the positioning of floral buds, floral morphogenesis and the expression of HSPs. Collaboratively with RBL and ULT1, influences floral meristem (FM) determinacy in an AGAMOUS and SUPERMAN-dependent manner, thus contributing to the floral developmental homeostasis. The protein is Peptidyl-prolyl cis-trans isomerase CYP40 of Arabidopsis thaliana (Mouse-ear cress).